Here is a 502-residue protein sequence, read N- to C-terminus: Glutamate--tRNA ligase (502 aa).

The short motif at Pro-12–Gly-22 is the 'HIGH' region element. The 'KMSKS' region motif lies at Lys-259 to Arg-263. Lys-262 is an ATP binding site.

The protein belongs to the class-I aminoacyl-tRNA synthetase family. Glutamate--tRNA ligase type 1 subfamily. In terms of assembly, monomer.

It is found in the cytoplasm. It carries out the reaction tRNA(Glu) + L-glutamate + ATP = L-glutamyl-tRNA(Glu) + AMP + diphosphate. Functionally, catalyzes the attachment of glutamate to tRNA(Glu) in a two-step reaction: glutamate is first activated by ATP to form Glu-AMP and then transferred to the acceptor end of tRNA(Glu). This is Glutamate--tRNA ligase from Chlorobium phaeobacteroides (strain DSM 266 / SMG 266 / 2430).